The sequence spans 793 residues: E3 UFM1-protein ligase 1 (793 aa).

Residues 2–212 (AADWEEIRRL…INNLLNLYGF (211 aa)) form a required for E3 UFM1-protein ligase activity region. Disordered regions lie at residues 405-472 (ALLE…RNKL) and 745-793 (GAEK…SVTE). Positions 427–439 (EGGGSVKSGGGGN) are enriched in gly residues. Residues 767–781 (SLQRELHSLSRDIKD) are compositionally biased toward basic and acidic residues.

This sequence belongs to the UFL1 family. Catalytic component of the UFM1 ribosome E3 ligase (UREL) complex. Interacts with E2-like enzyme UFC1.

It localises to the endoplasmic reticulum membrane. The protein localises to the cytoplasm. It is found in the cytosol. Its subcellular location is the nucleus. The protein resides in the chromosome. E3 protein ligase that mediates ufmylation, the covalent attachment of the ubiquitin-like modifier UFM1 to lysine residues on target proteins, and which plays a key role in various processes, such as ribosome recycling, response to DNA damage, interferon response or reticulophagy (also called ER-phagy). As part of the UREL complex, plays a key role in ribosome recycling by catalyzing mono-ufmylation of RPL26/uL24 subunit of the 60S ribosome. Ufmylation of RPL26/uL24 occurs on free 60S ribosomes following ribosome dissociation: it weakens the junction between post-termination 60S subunits and SEC61 translocons, promoting release and recycling of the large ribosomal subunit from the endoplasmic reticulum membrane. Ufmylation of RPL26/uL24 and subsequent 60S ribosome recycling either take place after normal termination of translation or after ribosome stalling during cotranslational translocation at the endoplasmic reticulum. Involved in reticulophagy in response to endoplasmic reticulum stress by mediating ufmylation of proteins such as CYB5R3 and RPN1, thereby promoting lysosomal degradation of ufmylated proteins. Ufmylation in response to endoplasmic reticulum stress is essential for processes such as hematopoiesis, blood vessel morphogenesis or inflammatory response. This Danio rerio (Zebrafish) protein is E3 UFM1-protein ligase 1.